Reading from the N-terminus, the 363-residue chain is NAD(P)H-quinone oxidoreductase subunit 1, chloroplastic (363 aa).

The next 8 membrane-spanning stretches (helical) occupy residues 30-50 (LFPI…IVWL), 98-118 (FSIG…VIPF), 127-147 (LSIG…GLLM), 165-185 (AAQS…ISLL), 203-223 (FWGW…ISSL), 248-268 (YSGI…LVSS), 300-320 (VFGT…FLFI), and 336-356 (LLNL…LLTT).

The protein belongs to the complex I subunit 1 family. NDH is composed of at least 16 different subunits, 5 of which are encoded in the nucleus.

Its subcellular location is the plastid. The protein localises to the chloroplast thylakoid membrane. It carries out the reaction a plastoquinone + NADH + (n+1) H(+)(in) = a plastoquinol + NAD(+) + n H(+)(out). It catalyses the reaction a plastoquinone + NADPH + (n+1) H(+)(in) = a plastoquinol + NADP(+) + n H(+)(out). NDH shuttles electrons from NAD(P)H:plastoquinone, via FMN and iron-sulfur (Fe-S) centers, to quinones in the photosynthetic chain and possibly in a chloroplast respiratory chain. The immediate electron acceptor for the enzyme in this species is believed to be plastoquinone. Couples the redox reaction to proton translocation, and thus conserves the redox energy in a proton gradient. This is NAD(P)H-quinone oxidoreductase subunit 1, chloroplastic from Nicotiana tomentosiformis (Tobacco).